A 532-amino-acid polypeptide reads, in one-letter code: Mitogen-activated protein kinase kinase mkk1 (532 aa).

One can recognise a Protein kinase domain in the interval I235–M505. Residues L241–V249 and K264 contribute to the ATP site. The active-site Proton acceptor is the D362.

The protein belongs to the protein kinase superfamily. STE Ser/Thr protein kinase family. MAP kinase kinase subfamily.

The enzyme catalyses L-seryl-[protein] + ATP = O-phospho-L-seryl-[protein] + ADP + H(+). The catalysed reaction is L-threonyl-[protein] + ATP = O-phospho-L-threonyl-[protein] + ADP + H(+). Functionally, mitogen-activated protein kinase kinase, part of the mkh1-mkk1-spm1 MAPK cascade that regulates regulates vegetative growth, conidial formation, colony surface hydrophobicity, osmotic stress, cell wall integrity maintenance, carbon and nitrogen source utilization, chitin distribution, septa formation, and pathogenicity. This is Mitogen-activated protein kinase kinase mkk1 from Cytospora mali (Apple Valsa canker fungus).